The primary structure comprises 425 residues: Protein disulfide isomerase-like 5-3 (425 aa).

A signal peptide spans methionine 1–glycine 28. The 125-residue stretch at alanine 29–alanine 153 folds into the Thioredoxin domain. Active-site nucleophile residues include cysteine 75 and cysteine 78. Cysteine 75 and cysteine 78 are oxidised to a cystine. Residues leucine 386 to methionine 406 form a helical membrane-spanning segment.

This sequence belongs to the protein disulfide isomerase family.

Its subcellular location is the membrane. Its function is as follows. Acts as a protein-folding catalyst that interacts with nascent polypeptides to catalyze the formation, isomerization, and reduction or oxidation of disulfide bonds. May play a role in storage protein biogenesis. The polypeptide is Protein disulfide isomerase-like 5-3 (PDIL5-3) (Oryza sativa subsp. japonica (Rice)).